The following is a 147-amino-acid chain: Lysozyme C (147 aa).

The signal sequence occupies residues 1–18; sequence MRSLLILVLCFLPLAALG. In terms of domain architecture, C-type lysozyme spans 19-147; that stretch reads KVYGRCELAA…VHAWIRGCRL (129 aa). Disulfide bonds link Cys24–Cys145, Cys48–Cys133, Cys82–Cys98, and Cys94–Cys112.

Belongs to the glycosyl hydrolase 22 family. Monomer.

The protein resides in the secreted. The enzyme catalyses Hydrolysis of (1-&gt;4)-beta-linkages between N-acetylmuramic acid and N-acetyl-D-glucosamine residues in a peptidoglycan and between N-acetyl-D-glucosamine residues in chitodextrins.. In terms of biological role, lysozymes have primarily a bacteriolytic function; those in tissues and body fluids are associated with the monocyte-macrophage system and enhance the activity of immunoagents. The protein is Lysozyme C (LYZ) of Meleagris gallopavo (Wild turkey).